Here is a 435-residue protein sequence, read N- to C-terminus: Elongation factor 1-alpha (435 aa).

One can recognise a tr-type G domain in the interval 4 to 227 (KPHLNLIVIG…YLDQLELPPK (224 aa)). The interval 13-20 (GHIDHGKS) is G1. 13-20 (GHIDHGKS) is a GTP binding site. Serine 20 is a Mg(2+) binding site. Residues 69–73 (GVTIN) form a G2 region. The interval 90-93 (DAPG) is G3. Residues 90-94 (DAPGH) and 152-155 (NKMD) contribute to the GTP site. Residues 152–155 (NKMD) are G4. Residues 193–195 (VAP) form a G5 region.

This sequence belongs to the TRAFAC class translation factor GTPase superfamily. Classic translation factor GTPase family. EF-Tu/EF-1A subfamily.

It localises to the cytoplasm. The catalysed reaction is GTP + H2O = GDP + phosphate + H(+). GTP hydrolase that promotes the GTP-dependent binding of aminoacyl-tRNA to the A-site of ribosomes during protein biosynthesis. The protein is Elongation factor 1-alpha of Saccharolobus solfataricus (strain ATCC 35092 / DSM 1617 / JCM 11322 / P2) (Sulfolobus solfataricus).